The sequence spans 128 residues: Cystatin-1 (128 aa).

The first 17 residues, 1 to 17 (MIRSAVVLTVLVGVCLA), serve as a signal peptide directing secretion. Residues 20-128 (GFVGGWSQVD…TKEVTSFECN (109 aa)) enclose the Cystatin domain. 2 disulfides stabilise this stretch: Cys84–Cys96 and Cys107–Cys127.

This sequence belongs to the cystatin family. In terms of tissue distribution, mainly expressed in gut.

The protein resides in the secreted. Its function is as follows. Inhibitor of cysteine proteinases. Strongly inhibits mammalian cathepsin B and H, and moderately inhibits mammalian cathepsin C. Also inhibits endogenous cathepsin B-like but not cathepsin C-like proteinases. May have a protective role against undesired digestion of a stored blood meal by endogenous peptidases. The polypeptide is Cystatin-1 (Ornithodoros moubata (Soft tick)).